A 253-amino-acid chain; its full sequence is Adapter protein MecA (253 aa).

This sequence belongs to the MecA family. In terms of assembly, homodimer.

Its function is as follows. Enables the recognition and targeting of unfolded and aggregated proteins to the ClpC protease or to other proteins involved in proteolysis. The chain is Adapter protein MecA from Streptococcus pyogenes serotype M6 (strain ATCC BAA-946 / MGAS10394).